We begin with the raw amino-acid sequence, 603 residues long: MTDVPAVRIRNFCIIAHIDHGKSTLADRLLQATGTVDERQMKEQFLDNMDLERERGITIKLQAARMNYQAKDGQQYVLNLIDTPGHVDFSYEVSRSLAACEGALLVVDASQGVEAQTLANVYLALEHNLEIIPVLNKIDLPGAEPDRVIGEIEEIIGLDCSGAILASAKEGIGISEILEAVVERIPPPPNTVDQRLRALIFDSYYDIYRGVIVYFRVMDGTVKKGDRVYLMASEKEYEIDELGVLSPTQKPVDELHAGEVGYFGAAIKAVADARVGDTITLCNAKAAEALPGYTEANPMVFCGMFPIDADQFEDLREALEKLRLNDAALQYEPETSSAMGFGFRCGFLGLLHMEIVQERLEREYDLDLIITAPSVVYKVITTKGEELYIDNPSHLPAPNDRERIEEPYVKVEMITPETYVGTLMELSQNRRGIFKDMKYLTQGRTTLTYEIPLAEVVTDFFDQMKSRSRGYASMEYHLIGYRENPLVKLDIMINGDPVDSLAMIVHRDKAYGVGRSMAEKLKELIPRHQFKVPIQASIGSKVIASEHIPALRKDVLAKCYGGDISRKKKLLQKQAKGKKRMKSVGTVDVPQEAFMAVLRLDQS.

Residues 7–189 (VRIRNFCIIA…AVVERIPPPP (183 aa)) enclose the tr-type G domain. GTP-binding positions include 19–24 (DHGKST) and 136–139 (NKID).

It belongs to the TRAFAC class translation factor GTPase superfamily. Classic translation factor GTPase family. LepA subfamily.

The protein localises to the cell inner membrane. It catalyses the reaction GTP + H2O = GDP + phosphate + H(+). Its function is as follows. Required for accurate and efficient protein synthesis under certain stress conditions. May act as a fidelity factor of the translation reaction, by catalyzing a one-codon backward translocation of tRNAs on improperly translocated ribosomes. Back-translocation proceeds from a post-translocation (POST) complex to a pre-translocation (PRE) complex, thus giving elongation factor G a second chance to translocate the tRNAs correctly. Binds to ribosomes in a GTP-dependent manner. The protein is Elongation factor 4 of Trichormus variabilis (strain ATCC 29413 / PCC 7937) (Anabaena variabilis).